Here is a 1044-residue protein sequence, read N- to C-terminus: Diacylglycerol lipase-alpha (1044 aa).

The Cytoplasmic segment spans residues 1-22; that stretch reads MPGIVVFRRRWSVGSDDLVLPA. A helical membrane pass occupies residues 23 to 43; it reads IFLFLLHTTWFVILSVVLFGL. The Extracellular portion of the chain corresponds to 44-60; sequence VYNPHEACSLNLVDHGR. Residues 61–81 traverse the membrane as a helical segment; sequence GYLGILLSCMIAEMAIIWLSM. Residues 82–101 are Cytoplasmic-facing; that stretch reads RGGILYTEPRDSMQYVLYVR. A helical membrane pass occupies residues 102–122; that stretch reads LAILVIEFIYAIVGIVWLTQY. The Extracellular portion of the chain corresponds to 123–136; that stretch reads YTSCNDLTAKNVTL. N-linked (GlcNAc...) asparagine glycosylation is present at Asn-133. The helical transmembrane segment at 137–157 threads the bilayer; it reads GMVVCNWVVILSVCITVLCVF. Over 158–1044 the chain is Cytoplasmic; sequence DPTGRTFVKL…KQDDLVISAR (887 aa). Residues Ser-472 and Asp-524 each act as charge relay system in the active site. A phosphoserine mark is found at Ser-728, Ser-730, Ser-733, Ser-744, Ser-784, Ser-786, Ser-808, Ser-810, Ser-835, Ser-849, and Ser-954. Positions 848-905 are disordered; that stretch reads LSKHSQDTQPLEAALGSGGVTPERPPSAANDEEEAAGGSEGGGVAPRGELALHNGRLG. The tract at residues 1013–1044 is disordered; the sequence is QECLATDKIRTSTPTGHGASPTKQDDLVISAR. Residue Thr-1025 is modified to Phosphothreonine.

This sequence belongs to the AB hydrolase superfamily. Lipase family. In terms of assembly, interacts (via C-terminal) with CAMK2A; leading to the phosphorylation and inhibition of DAGLA enzymatic activity. Interacts (via PPXXF motif) with HOMER1 and HOMER2; this interaction is required for DAGLA membrane localization. Ca(2+) is required as a cofactor. Post-translationally, phosphorylated at Ser-784 and Ser-810 by CAMK2A; phosphorylation by CAMK2A inhibits diacylglycerol lipase activity.

It is found in the cell membrane. The protein resides in the cell projection. Its subcellular location is the dendritic spine membrane. It localises to the postsynaptic density membrane. The protein localises to the early endosome membrane. The catalysed reaction is a 1,2-diacyl-sn-glycerol + H2O = a 2-acylglycerol + a fatty acid + H(+). It carries out the reaction 1-octadecanoyl-2-(5Z,8Z,11Z,14Z-eicosatetraenoyl)-sn-glycerol + H2O = 2-(5Z,8Z,11Z,14Z-eicosatetraenoyl)-glycerol + octadecanoate + H(+). The enzyme catalyses 1,2-di-(9Z-octadecenoyl)-sn-glycerol + H2O = 2-(9Z-octadecenoyl)-glycerol + (9Z)-octadecenoate + H(+). It catalyses the reaction 1-(9Z-octadecenoyl)-2-(5Z,8Z,11Z,14Z-eicosatetraenoyl)-sn-glycerol + H2O = 2-(5Z,8Z,11Z,14Z-eicosatetraenoyl)-glycerol + (9Z)-octadecenoate + H(+). The catalysed reaction is 1-(9Z-octadecenoyl)-2-octadecanoyl-sn-glycerol + H2O = 2-octadecanoylglycerol + (9Z)-octadecenoate + H(+). It carries out the reaction 1-(9Z-octadecenoyl)-2-(9Z,12Z-octadecadienoyl)-sn-glycerol + H2O = 2-(9Z,12Z-octadecadienoyl)-glycerol + (9Z)-octadecenoate + H(+). The enzyme catalyses 1-(9Z-octadecenoyl)-2-O-(5Z,8Z,11Z,14Z-eicosatetraenyl)-sn-glycerol + H2O = 2-O-(5Z,8Z,11Z,14Z)-eicosatetraenylglycerol + (9Z)-octadecenoate + H(+). Inhibited by 1,2,3-triazole urea covalent inhibitors KT172, DH376 and DO34. Inhibited by p-hydroxy-mercuri-benzoate and HgCl(2), but not to PMSF. Also inhibited by RHC80267. Diacylglycerol lipase activity is inhibited by the phosphorylation of Ser-784 and Ser-810 by CAMK2A. Its function is as follows. Serine hydrolase that hydrolyzes arachidonic acid-esterified diacylglycerols (DAGs) to produce the principal endocannabinoid, 2-arachidonoylglycerol (2-AG). Preferentially hydrolyzes sn-1 fatty acids from diacylglycerols (DAG) that contain arachidonic acid (AA) esterified at the sn-2 position to biosynthesize 2-AG. Has negligible activity against other lipids including monoacylglycerols and phospholipids. Plays a key role in regulating 2-AG signaling in the CNS. Controls the activity of 2-AG as a retrograde messenger at neuronal synapses. Supports axonal growth during development and adult neurogenesis. Plays a role for eCB signaling in the physiological regulation of anxiety and depressive behaviors. Also regulates neuroinflammatory responses in the brain, in particular, LPS-induced microglial activation. This is Diacylglycerol lipase-alpha (Dagla) from Rattus norvegicus (Rat).